The primary structure comprises 1012 residues: Putative cellulose synthase-like protein D5 (1012 aa).

The tract at residues 1 to 85 (MSGDYANYTV…APSSNKSLLV (85 aa)) is disordered. A compositionally biased stretch (low complexity) spans 20-37 (PSGGAPPAAPSAGGARPG). Basic and acidic residues predominate over residues 57 to 69 (GGGDDGAKMDRRL). The next 2 membrane-spanning stretches (helical) occupy residues 150 to 170 (ILSP…LFLV) and 180 to 200 (ALWL…SWLL). Residue D280 is part of the active site. Residues 597–620 (PRQGSEAMPGAGGGRSGGGSVGGD) form a disordered region. Residues 606 to 618 (GAGGGRSGGGSVG) are compositionally biased toward gly residues. D717 is a catalytic residue. The next 6 membrane-spanning stretches (helical) occupy residues 799-819 (LFLI…QFIV), 825-845 (TFLS…LLEV), 871-891 (LAAV…SFTL), 914-934 (SLFI…VVGV), 948-968 (LLGG…FAKG), and 978-998 (TIVY…WITI).

It belongs to the glycosyltransferase 2 family. Plant cellulose synthase-like D subfamily.

The protein localises to the golgi apparatus membrane. Thought to be a Golgi-localized beta-glycan synthase that polymerize the backbones of noncellulosic polysaccharides (hemicelluloses) of plant cell wall. The polypeptide is Putative cellulose synthase-like protein D5 (CSLD5) (Oryza sativa subsp. indica (Rice)).